Reading from the N-terminus, the 324-residue chain is Homoserine kinase (324 aa).

ATP is bound at residue 100–110 (PLSSGMGSSAA).

It belongs to the GHMP kinase family. Homoserine kinase subfamily.

It localises to the cytoplasm. The enzyme catalyses L-homoserine + ATP = O-phospho-L-homoserine + ADP + H(+). It participates in amino-acid biosynthesis; L-threonine biosynthesis; L-threonine from L-aspartate: step 4/5. Catalyzes the ATP-dependent phosphorylation of L-homoserine to L-homoserine phosphate. The sequence is that of Homoserine kinase from Chlorobaculum tepidum (strain ATCC 49652 / DSM 12025 / NBRC 103806 / TLS) (Chlorobium tepidum).